A 687-amino-acid polypeptide reads, in one-letter code: Adhesion G-protein coupled receptor G1 (687 aa).

The N-terminal stretch at 1-25 (MTAQSLLQTTLFLLSLLFLVQGAHG) is a signal peptide. Residue 26 to 33 (RGHREDFR) coordinates heparin. At 26–402 (RGHREDFRFC…VEVDAVHKHY (377 aa)) the chain is on the extracellular side. Disulfide bonds link C35–C91 and C121–C177. N-linked (GlcNAc...) asparagine glycosylation is found at N39, N148, and N171. 190-200 (LKHPQKASRRP) contributes to the heparin binding site. The GAIN-B domain occupies 224-395 (DTVSFEEDRI…AVLMVSSVEV (172 aa)). N-linked (GlcNAc...) asparagine glycans are attached at residues N234, N303, N324, and N341. Intrachain disulfides connect C346-C377 and C366-C379. The tract at residues 346–395 (CVFWVEDPTLSSPGHWSSAGCETVRRETQTSCLCNHLTYFAVLMVSSVEV) is GPS. The tract at residues 384–397 (YFAVLMVSSVEVDA) is stachel. Residues 403 to 423 (LSLLSYVGCVVSALACVVTIA) form a helical membrane-spanning segment. Over 424–442 (AYLCSRRKPRDYTIKVHMN) the chain is Cytoplasmic. The chain crosses the membrane as a helical span at residues 443 to 463 (LLLAVFLLDTSFLLSEPVALT). The Extracellular segment spans residues 464–470 (GSEAGCR). Residues 471-491 (ASAIFLHFSLLACLSWMGLEG) traverse the membrane as a helical segment. Residues 492–512 (YNLYRLVVEVFGTYVPGYLLK) are Cytoplasmic-facing. The helical transmembrane segment at 513–533 (LSAMGWGFPIFLVTLVALVDV) threads the bilayer. The Extracellular segment spans residues 534-570 (DNYGPIILAVHRTPEGVIYPSMCWIRDSLVSYITNLG). A helical transmembrane segment spans residues 571–591 (LFSLVFLFNMAMLATMVVQIL). Over 592-603 (RLRPHTQKWSHV) the chain is Cytoplasmic. Residues 604–624 (LTLLGLSLVLGLPWALIFFSF) traverse the membrane as a helical segment. The Extracellular portion of the chain corresponds to 625–630 (ASGTFQ). Residues 631 to 651 (LVILYLFSIITSFQGFLIFIW) form a helical membrane-spanning segment. Residues 652-687 (YWSMRLQARGGPSPLKSNSDSARLPISSGSTSSSRI) lie on the Cytoplasmic side of the membrane. The interval 664 to 687 (SPLKSNSDSARLPISSGSTSSSRI) is disordered. Residues 678-687 (SSGSTSSSRI) show a composition bias toward low complexity.

Belongs to the G-protein coupled receptor 2 family. LN-TM7 subfamily. Heterodimer of 2 chains generated by proteolytic processing; the large extracellular N-terminal fragment (ADGRG1 NT) and the membrane-bound C-terminal fragment (ADGRG1-CT) predominantly remain associated and non-covalently linked. ADGRG1 NT self-associates in a trans-trans manner; the homophilic interaction enhances receptor signaling. Interacts with TGM2. Interacts with heparin; leading to the reduction of ADGRG1 shedding. Interacts with COL3A1. Part of a GPCR-tetraspanin complex at least consisting of ADGRG1, CD81, eventually CD9, and GNA11 in which CD81 is enhancing the association of ADGRG1 with GNA11. Post-translationally, autoproteolytically cleaved into 2 fragments; the large extracellular N-terminal fragment (ADGRG1 NT) and the membrane-bound C-terminal fragment (ADGRG1 CT) predominantly remain associated and non-covalently linked. Shedding to yield the secreted ADGRG1 N-terminal fragment seems to involve metalloprotease(s). In terms of processing, ubiquitinated. Undergoes polyubiquitination upon activation.

The protein localises to the cell membrane. It is found in the secreted. Its subcellular location is the membrane raft. Its activity is regulated as follows. Forms a heterodimer of 2 chains generated by proteolytic processing that remain associated through non-covalent interactions mediated by the GAIN-B domain. In the inactivated receptor, the Stachel sequence (also named stalk) is embedded in the GAIN-B domain, where it adopts a beta-strand conformation. On activation, the Stachel moves into the 7 transmembrane region and adopts a twisted hook-shaped configuration that forms contacts within the receptor, leading to coupling of a G-alpha protein, which activates signaling. The cleaved GAIN-B and N-terminal domains can then dissociate from the rest of the receptor. Adhesion G-protein coupled receptor (aGPCR) for steroid hormone 17alpha-hydroxypregnenolone (17-OH), which is involved in cell adhesion and cell-cell interactions. Ligand binding causes a conformation change that triggers signaling via guanine nucleotide-binding proteins (G proteins) and modulates the activity of downstream effectors, such as RhoA pathway. ADGRG1 is coupled to G(12) and/or G(13) G proteins (GNA12 and GNA13, respectively) and mediates the activation Rho small GTPases. Acts as a potent suppressor of ferroptosis: binding to 17-OH-binding initiates signaling that down-regulates CD36 and alleviates ferroptosis-induced liver injury. Ligand-binding also induces cell adhesion activity via association with proteins such as collagen III/COL3A1 and TGM2. Mediates cell matrix adhesion in developing neurons and hematopoietic stem cells. Involved in cortical development, specifically in maintenance of the pial basement membrane integrity and in cortical lamination: association with COL3A1 in the developing brain inhibits neuronal migration via activation of the RhoA pathway. Together with TGM2, acts as a regulator of myelination and myelin repair in oligodendrocyte precursor cells. Acts as a hemostatic sensor of shear force: G protein-coupled receptor signaling is activated in response to shear force in platelets, promoting G(13) G protein signaling, and platelet shape change and aggregation in a COL3A1-dependent manner. Acts as an inhibitor of VEGFA production thereby inhibiting angiogenesis through a signaling pathway mediated by PRKCA. Plays a role in the maintenance of hematopoietic stem cells in bone marrow niche. Plays an essential role in testis development. This is Adhesion G-protein coupled receptor G1 (ADGRG1) from Pan troglodytes (Chimpanzee).